We begin with the raw amino-acid sequence, 449 residues long: Xylose isomerase (449 aa).

Residues histidine 101 and aspartate 104 contribute to the active site. Glutamate 232, glutamate 268, histidine 271, aspartate 296, aspartate 307, aspartate 309, and aspartate 340 together coordinate Mg(2+).

It belongs to the xylose isomerase family. As to quaternary structure, homotetramer. Mg(2+) serves as cofactor.

The protein resides in the cytoplasm. It carries out the reaction alpha-D-xylose = alpha-D-xylulofuranose. The chain is Xylose isomerase from Bifidobacterium longum (strain DJO10A).